Reading from the N-terminus, the 98-residue chain is Lipolysis-activating peptide 1-alpha chain (98 aa).

Residues 1–22 (MMKLVLFGIIVILFSMIGSIHG) form the signal peptide. Residues 26 to 89 (PGNYPLNTYG…IWDAVKRHCK (64 aa)) form the LCN-type CS-alpha/beta domain. Intrachain disulfides connect cysteine 40-cysteine 63, cysteine 49-cysteine 68, and cysteine 53-cysteine 70. Lysine 96 is subject to Lysine amide.

Belongs to the long (3 C-C) scorpion toxin superfamily. In terms of assembly, monomer (edited version) and heterodimer (non-edited version) of this alpha chain and a beta chain (AC B8XGZ8). Expressed by the venom gland.

It is found in the secreted. The heterodimer non-edited LVP1 induces lipolysis in rat adipocytes. Induction of lipolysis by LVP1 appears to be mediated through the beta-2 adrenergic receptor pathway (ADRB2). In terms of biological role, the edited BmKBTx-like, similar to beta-toxins, may modulate voltage-gated sodium channels (Nav) and may block voltage-gated potassium channels (Kv). The protein is Lipolysis-activating peptide 1-alpha chain of Buthus israelis (Israeli scorpion).